We begin with the raw amino-acid sequence, 137 residues long: Small ribosomal subunit protein uS12 (137 aa).

The tract at residues 1-57 (MPTINQLVRKPRQSKSKKSDSPVLNRGFNSKKKQFTNLNSPQKRGVCTRVGTMTPRK) is disordered. Asp102 is modified (3-methylthioaspartic acid). The tract at residues 118–137 (SGVDGRRQGRSLYGTKKPKN) is disordered.

It belongs to the universal ribosomal protein uS12 family. Part of the 30S ribosomal subunit. Contacts proteins S8 and S17. May interact with IF1 in the 30S initiation complex.

Functionally, with S4 and S5 plays an important role in translational accuracy. Interacts with and stabilizes bases of the 16S rRNA that are involved in tRNA selection in the A site and with the mRNA backbone. Located at the interface of the 30S and 50S subunits, it traverses the body of the 30S subunit contacting proteins on the other side and probably holding the rRNA structure together. The combined cluster of proteins S8, S12 and S17 appears to hold together the shoulder and platform of the 30S subunit. The polypeptide is Small ribosomal subunit protein uS12 (Staphylococcus haemolyticus (strain JCSC1435)).